The following is a 404-amino-acid chain: Probable protein phosphatase 1N (404 aa).

The PPM-type phosphatase domain occupies 59-319 (RFGASAVQGW…DNMTCMVVCF (261 aa)). Mn(2+)-binding residues include Asp-96, Gly-97, Asp-267, and Asp-310.

Belongs to the PP2C family. Mg(2+) is required as a cofactor. The cofactor is Mn(2+).

The enzyme catalyses O-phospho-L-seryl-[protein] + H2O = L-seryl-[protein] + phosphate. It carries out the reaction O-phospho-L-threonyl-[protein] + H2O = L-threonyl-[protein] + phosphate. The polypeptide is Probable protein phosphatase 1N (Ppm1n) (Mus musculus (Mouse)).